We begin with the raw amino-acid sequence, 198 residues long: Dynein light chain Tctex-type protein 2 (198 aa).

A disordered region spans residues 1–34 (MEKRGRGVKSSPIQTPNQTPQQAPVTPRKERRPS). Polar residues predominate over residues 11-24 (SPIQTPNQTPQQAP).

It belongs to the dynein light chain Tctex-type family. In terms of assembly, interacts with CCDC159. Interacts with CSNK2B. Expressed predominantly in testis. Also expressed in brain, lung and trachea.

The protein localises to the cytoplasm. It is found in the cytoskeleton. Its subcellular location is the cytoplasmic granule. It localises to the membrane. In terms of biological role, may be an accessory component of axonemal dynein and cytoplasmic dynein 1. Candidate for involvement in male sterility. The polypeptide is Dynein light chain Tctex-type protein 2 (Homo sapiens (Human)).